The following is a 249-amino-acid chain: tRNA pseudouridine synthase A (249 aa).

The active-site Nucleophile is D53. Y111 provides a ligand contact to substrate.

Belongs to the tRNA pseudouridine synthase TruA family. Homodimer.

The catalysed reaction is uridine(38/39/40) in tRNA = pseudouridine(38/39/40) in tRNA. Functionally, formation of pseudouridine at positions 38, 39 and 40 in the anticodon stem and loop of transfer RNAs. The chain is tRNA pseudouridine synthase A from Streptococcus gordonii (strain Challis / ATCC 35105 / BCRC 15272 / CH1 / DL1 / V288).